The sequence spans 49 residues: Large ribosomal subunit protein bL34 (49 aa).

It belongs to the bacterial ribosomal protein bL34 family.

This chain is Large ribosomal subunit protein bL34, found in Sorangium cellulosum (strain So ce56) (Polyangium cellulosum (strain So ce56)).